Consider the following 623-residue polypeptide: Prothrombin (623 aa).

An N-terminal signal peptide occupies residues 1–24 (MAHVRGLQLPGCLALAALCTLVHS). A propeptide spanning residues 25 to 43 (QHVFLAPQQALSLLQRVRR) is cleaved from the precursor. The region spanning 44 to 90 (ANSVFLEEVRKGNLERECVEETCSYEEAFEALESSTATDVFWAKYTA) is the Gla domain. Glu50, Glu51, Glu58, Glu60, Glu63, Glu64, Glu69, Glu70, Glu73, and Glu76 each carry 4-carboxyglutamate. Cysteines 61 and 66 form a disulfide. Disulfide bonds link Cys91–Cys104, Cys109–Cys187, Cys130–Cys170, Cys158–Cys182, Cys214–Cys292, Cys235–Cys275, Cys263–Cys287, Cys337–Cys483, Cys392–Cys408, Cys537–Cys551, and Cys565–Cys595. 2 Kringle domains span residues 108–187 (NCAE…IPVC) and 213–292 (QCVP…LNYC). Asn122 and Asn144 each carry an N-linked (GlcNAc...) asparagine glycan. Positions 365-619 (IVEGSDAEIG…LKKWIQKVID (255 aa)) constitute a Peptidase S1 domain. Catalysis depends on His407, which acts as the Charge relay system. Asn417 carries an N-linked (GlcNAc...) asparagine glycan. Asp463 functions as the Charge relay system in the catalytic mechanism. The segment at 552 to 574 (AGYKPDEGKRGDACEGDSGGPFV) is high affinity receptor-binding region which also known as the TP508 peptide. Catalysis depends on Ser569, which acts as the Charge relay system.

This sequence belongs to the peptidase S1 family. In terms of assembly, heterodimer (named alpha-thrombin) of a light and a heavy chain; disulfide-linked. Forms a heterodimer with SERPINA5. In plasma, interacts (via N-terminus) with alpha-1-microglobulin; this interaction does not prevent the activation of prothrombin to thrombin. In terms of processing, the gamma-carboxyglutamyl residues, which bind calcium ions, result from the carboxylation of glutamyl residues by a microsomal enzyme, the vitamin K-dependent carboxylase. The modified residues are necessary for the calcium-dependent interaction with a negatively charged phospholipid surface, which is essential for the conversion of prothrombin to thrombin. In the penultimate step of the coagulation cascade, prothrombin is converted to thrombin by the prothrombinase complex composed of factor Xa (F10), cofactor Va (F5), and phospholipids. This activation requires factor Xa-catalyzed sequential cleavage at 2 sites, Arg-315 and Arg-364, along 2 possible pathways. In the first pathway, the first cleavage occurs at Arg-315, leading to the formation of the inactive intermediate prethrombin-2. This pathway preferentially occurs on platelets and in the absence of cofactor Va. In the second pathway, the first cleavage occurs at Arg-364, which separates protease domain into 2 chains that remain connected through a disulfide bond and generates the active intermediate meizothrombin. The presence of cofactor Va directs activation along the meizothrombin pathway and greatly accelerates the rate of cleavage at Arg-364, but has a smaller effect on the cleavage of meizothrombin at Arg-315. Meizothrombin accumulates as an intermediate when prothrombinase is assembled on the membrane of red blood cells.

The catalysed reaction is Selective cleavage of Arg-|-Gly bonds in fibrinogen to form fibrin and release fibrinopeptides A and B.. With respect to regulation, activity is promoted in the presence of negatively charged surfaces, such as polyphosphate and dextran sulfate. Inhibited by SERPINA5. Functionally, thrombin, which cleaves bonds after Arg and Lys, converts fibrinogen to fibrin and activates factors V, VII, VIII, XIII, and, in complex with thrombomodulin, protein C. Functions in blood homeostasis, inflammation and wound healing. Activates coagulation factor XI (F11); activation is promoted by the contact with negatively charged surfaces. Triggers the production of pro-inflammatory cytokines, such as MCP-1/CCL2 and IL8/CXCL8, in endothelial cells. This Pongo abelii (Sumatran orangutan) protein is Prothrombin (F2).